The chain runs to 231 residues: 5'-methylthioadenosine/S-adenosylhomocysteine nucleosidase (231 aa).

The active-site Proton acceptor is E12. Residues G78, M153, and 174 to 175 (ME) each bind substrate. Catalysis depends on D198, which acts as the Proton donor.

The protein belongs to the PNP/UDP phosphorylase family. MtnN subfamily.

It catalyses the reaction S-adenosyl-L-homocysteine + H2O = S-(5-deoxy-D-ribos-5-yl)-L-homocysteine + adenine. It carries out the reaction S-methyl-5'-thioadenosine + H2O = 5-(methylsulfanyl)-D-ribose + adenine. The catalysed reaction is 5'-deoxyadenosine + H2O = 5-deoxy-D-ribose + adenine. It participates in amino-acid biosynthesis; L-methionine biosynthesis via salvage pathway; S-methyl-5-thio-alpha-D-ribose 1-phosphate from S-methyl-5'-thioadenosine (hydrolase route): step 1/2. Catalyzes the irreversible cleavage of the glycosidic bond in both 5'-methylthioadenosine (MTA) and S-adenosylhomocysteine (SAH/AdoHcy) to adenine and the corresponding thioribose, 5'-methylthioribose and S-ribosylhomocysteine, respectively. Also cleaves 5'-deoxyadenosine, a toxic by-product of radical S-adenosylmethionine (SAM) enzymes, into 5-deoxyribose and adenine. The polypeptide is 5'-methylthioadenosine/S-adenosylhomocysteine nucleosidase (Bacillus cytotoxicus (strain DSM 22905 / CIP 110041 / 391-98 / NVH 391-98)).